Consider the following 497-residue polypeptide: Glutamyl-tRNA(Gln) amidotransferase subunit A (497 aa).

Catalysis depends on charge relay system residues Lys75 and Ser150. Catalysis depends on Ser174, which acts as the Acyl-ester intermediate.

Belongs to the amidase family. GatA subfamily. Heterotrimer of A, B and C subunits.

It carries out the reaction L-glutamyl-tRNA(Gln) + L-glutamine + ATP + H2O = L-glutaminyl-tRNA(Gln) + L-glutamate + ADP + phosphate + H(+). Its function is as follows. Allows the formation of correctly charged Gln-tRNA(Gln) through the transamidation of misacylated Glu-tRNA(Gln) in organisms which lack glutaminyl-tRNA synthetase. The reaction takes place in the presence of glutamine and ATP through an activated gamma-phospho-Glu-tRNA(Gln). This chain is Glutamyl-tRNA(Gln) amidotransferase subunit A, found in Paraburkholderia phymatum (strain DSM 17167 / CIP 108236 / LMG 21445 / STM815) (Burkholderia phymatum).